Consider the following 557-residue polypeptide: (-)-germacrene D synthase (557 aa).

Residues D310, D314, and E462 each contribute to the Mg(2+) site. A DDXXD motif motif is present at residues 310–314 (DDIYD).

The protein belongs to the terpene synthase family. Tpsa subfamily. Mg(2+) serves as cofactor. In terms of tissue distribution, expressed in flowers. Detected in stems, young leaves and tendrils.

It localises to the cytoplasm. It catalyses the reaction (2E,6E)-farnesyl diphosphate + H2O = (1E,4S,5E,7R)-germacra-1(10),5-dien-11-ol + diphosphate. The enzyme catalyses (2E,6E)-farnesyl diphosphate = (-)-germacrene D + diphosphate. It functions in the pathway secondary metabolite biosynthesis; terpenoid biosynthesis. Functionally, involved in the biosynthesis of germacrene D. Can use farnesyl diphosphate as substrate, but not geranyl diphosphate or geranylgeranyl diphosphate. Produces mainly (-)-germacrene D along with gamma-cadinene. The sequence is that of (-)-germacrene D synthase from Vitis vinifera (Grape).